We begin with the raw amino-acid sequence, 141 residues long: Ly6/PLAUR domain-containing protein 1 (141 aa).

The N-terminal stretch at 1-20 (MWVLGIAATFCGLFWLPGLA) is a signal peptide. Cystine bridges form between Cys25-Cys54, Cys28-Cys37, Cys46-Cys71, Cys77-Cys100, Cys88-Cys97, and Cys101-Cys106. The 83-residue stretch at 25–107 (CYQCEEFQLN…ISCCNTPLCN (83 aa)) folds into the UPAR/Ly6 domain. Residue Asn45 is glycosylated (N-linked (GlcNAc...) asparagine). Gly115 carries the GPI-anchor amidated glycine lipid modification. Residues 116–141 (SSASAIRPGLLTTLLFFHLALCLAHC) constitute a propeptide, removed in mature form.

In terms of assembly, interacts with CHRNA4 and nAChRs containing alpha-4:beta-2 (CHRNA4:CHRNB2) and alpha-7 (CHRNA7) subunits. In terms of tissue distribution, preferentially expressed in the nervous system. Expressed in embryonic and postnatal postmitotic central and peripheral neurons including subpopulations of motor neurons, sensory neurons, interneurons and neurons of the autonomous nervous system. Expressed around the growing nerves in the limb bud. Expressed at high levels in specific brain regions such as the prefrontal cortex, amygdala, hippocampus, mediodorsal thalamus, dentate gyrus and specific brainstem nuclei (at protein level).

Its subcellular location is the cell membrane. In terms of biological role, believed to act as a modulator of nicotinic acetylcholine receptors (nAChRs) activity. In vitro increases receptor desensitization and decreases affinity for ACh of alpha-4:beta-2-containing nAChRs. May play a role in the intracellular trafficking of alpha-4:beta-2 and alpha-7-containing nAChRs and may inhibit their expression at the cell surface. May be involved in the control of anxiety. The chain is Ly6/PLAUR domain-containing protein 1 (Lypd1) from Mus musculus (Mouse).